The chain runs to 387 residues: GDP-mannose transporter (387 aa).

Residues methionine 1 to arginine 25 are compositionally biased toward basic and acidic residues. The Cytoplasmic segment spans residues methionine 1–serine 42. Residues methionine 1–asparagine 45 form a disordered region. Low complexity predominate over residues proline 32–asparagine 45. The helical transmembrane segment at isoleucine 43 to valine 63 threads the bilayer. Residues threonine 64–glycine 71 are Lumenal-facing. A helical membrane pass occupies residues valine 72–isoleucine 92. The Cytoplasmic portion of the chain corresponds to glutamine 93–lysine 112. The helical transmembrane segment at lysine 113–threonine 129 threads the bilayer. Residues lysine 130 to serine 136 lie on the Lumenal side of the membrane. A helical transmembrane segment spans residues isoleucine 137–tyrosine 153. At glycine 154 to serine 162 the chain is on the cytoplasmic side. Residues valine 163–alanine 184 traverse the membrane as a helical segment. Residues aspartate 185–threonine 206 are Lumenal-facing. The helical transmembrane segment at leucine 207 to glycine 227 threads the bilayer. At methionine 228–aspartate 241 the chain is on the cytoplasmic side. Residues threonine 242–glutamate 262 form a helical membrane-spanning segment. Residues aspartate 263–serine 280 are Lumenal-facing. A helical transmembrane segment spans residues leucine 281–tryptophan 301. The Cytoplasmic segment spans residues cysteine 302 to threonine 309. The chain crosses the membrane as a helical span at residues threonine 310–phenylalanine 329. The Lumenal portion of the chain corresponds to phenylalanine 330 to aspartate 332. The chain crosses the membrane as a helical span at residues proline 333–alanine 355. The Cytoplasmic segment spans residues lysine 356–serine 387. Residues glycine 366–serine 387 form a disordered region. Polar residues predominate over residues leucine 368–methionine 381.

This sequence belongs to the TPT transporter family. SLC35D subfamily. As to quaternary structure, homooligomer.

The protein resides in the golgi apparatus membrane. It localises to the cytoplasmic vesicle membrane. Its subcellular location is the endoplasmic reticulum membrane. Its function is as follows. Involved in the import of GDP-mannose from the cytoplasm into the Golgi lumen. The polypeptide is GDP-mannose transporter (VRG4) (Coccidioides immitis (strain RS) (Valley fever fungus)).